A 522-amino-acid polypeptide reads, in one-letter code: 2-isopropylmalate synthase (522 aa).

Residues 5–267 enclose the Pyruvate carboxyltransferase domain; sequence VIIFDTTLRD…ETGINAKEIH (263 aa). 4 residues coordinate Mn(2+): D14, H202, H204, and N238. The regulatory domain stretch occupies residues 392–522; sequence QLQQLVVQSD…MQKNRELGGV (131 aa).

The protein belongs to the alpha-IPM synthase/homocitrate synthase family. LeuA type 1 subfamily. In terms of assembly, homodimer. It depends on Mn(2+) as a cofactor.

It is found in the cytoplasm. The catalysed reaction is 3-methyl-2-oxobutanoate + acetyl-CoA + H2O = (2S)-2-isopropylmalate + CoA + H(+). It participates in amino-acid biosynthesis; L-leucine biosynthesis; L-leucine from 3-methyl-2-oxobutanoate: step 1/4. In terms of biological role, catalyzes the condensation of the acetyl group of acetyl-CoA with 3-methyl-2-oxobutanoate (2-ketoisovalerate) to form 3-carboxy-3-hydroxy-4-methylpentanoate (2-isopropylmalate). The polypeptide is 2-isopropylmalate synthase (Shewanella baltica (strain OS155 / ATCC BAA-1091)).